The following is a 254-amino-acid chain: Flavin-dependent thymidylate synthase (254 aa).

A ThyX domain is found at 7-237 (LRVQLIARTE…PAVFADFEIY (231 aa)). FAD-binding positions include Ser71, 95-97 (RHR), and Gln103. DUMP is bound by residues 92 to 95 (ELIR), 103 to 107 (QLSQR), and Arg176. The short motif at 95 to 105 (RHRHFSYSQLS) is the ThyX motif element. FAD is bound by residues 192–194 (NYR) and His198. Residue Arg203 coordinates dUMP. The active-site Involved in ionization of N3 of dUMP, leading to its activation is Arg203.

Belongs to the thymidylate synthase ThyX family. Homotetramer. The cofactor is FAD.

The enzyme catalyses dUMP + (6R)-5,10-methylene-5,6,7,8-tetrahydrofolate + NADPH + H(+) = dTMP + (6S)-5,6,7,8-tetrahydrofolate + NADP(+). Its pathway is pyrimidine metabolism; dTTP biosynthesis. Its function is as follows. Catalyzes the reductive methylation of 2'-deoxyuridine-5'-monophosphate (dUMP) to 2'-deoxythymidine-5'-monophosphate (dTMP) while utilizing 5,10-methylenetetrahydrofolate (mTHF) as the methyl donor, and NADPH and FADH(2) as the reductant. This chain is Flavin-dependent thymidylate synthase, found in Mycobacterium sp. (strain JLS).